Consider the following 678-residue polypeptide: Serine/threonine-protein kinase mph1 (678 aa).

2 disordered regions span residues 39–93 (KNDT…NSAL) and 114–209 (LPST…SNSV). Composition is skewed to polar residues over residues 41-66 (DTFS…SSGA) and 114-125 (LPSTNASHSEVS). The Protein kinase domain occupies 316–607 (FIKLGVVGKG…LVHPFLNPLP (292 aa)). ATP-binding positions include 322-330 (VGKGGSSMV) and Lys-345. The Proton acceptor role is filled by Asp-442.

This sequence belongs to the protein kinase superfamily. Ser/Thr protein kinase family.

The catalysed reaction is L-seryl-[protein] + ATP = O-phospho-L-seryl-[protein] + ADP + H(+). It carries out the reaction L-threonyl-[protein] + ATP = O-phospho-L-threonyl-[protein] + ADP + H(+). The enzyme catalyses L-tyrosyl-[protein] + ATP = O-phospho-L-tyrosyl-[protein] + ADP + H(+). In terms of biological role, involved in mitotic spindle assembly checkpoint signaling, a process that delays anaphase until chromosomes are bioriented on the spindle, and in the repair of incorrect mitotic kinetochore-spindle microtubule attachments. Phosphorylates spc7/knl1 on MELT motifs; phosphorylation is required for recruitment of the BUB1-BUB3 complex to kinetochores. This Schizosaccharomyces pombe (strain 972 / ATCC 24843) (Fission yeast) protein is Serine/threonine-protein kinase mph1.